The following is a 149-amino-acid chain: NPC intracellular cholesterol transporter 2 (149 aa).

An N-terminal signal peptide occupies residues 1 to 21; sequence MRLLVAAFLLLALGDLGPGGA. Cystine bridges form between Cys27–Cys140, Cys42–Cys47, and Cys93–Cys99. N-linked (GlcNAc...) asparagine glycosylation occurs at Asn58. Residue Lys116 is modified to N6-acetyllysine.

This sequence belongs to the NPC2 family. In terms of assembly, interacts with NPC1 (via the second lumenal domain) in a cholestrol-dependent manner. Interacts with NUS1/NgBR, the interaction stabilizes NCP2 and regulates cholesterol trafficking. Interacts with DHDDS. Interacts with NEDD4L (via C2 domain). Interacts with NPC1L1. As to expression, epididymis. High levels are found in the caput and corpus regions. Weaker levels in the distal cauda and in the efferent ducts.

The protein localises to the secreted. It is found in the endoplasmic reticulum. It localises to the lysosome. The enzyme catalyses cholesterol(in) = cholesterol(out). Functionally, intracellular cholesterol transporter which acts in concert with NPC1 and plays an important role in the egress of cholesterol from the lysosomal compartment. Unesterified cholesterol that has been released from LDLs in the lumen of the late endosomes/lysosomes is transferred by NPC2 to the cholesterol-binding pocket in the N-terminal domain of NPC1. May bind and mobilize cholesterol that is associated with membranes. NPC2 binds cholesterol with a 1:1 stoichiometry. Can bind a variety of sterols, including lathosterol, desmosterol and the plant sterols stigmasterol and beta-sitosterol. The secreted form of NCP2 regulates biliary cholesterol secretion via stimulation of ABCG5/ABCG8-mediated cholesterol transport. The chain is NPC intracellular cholesterol transporter 2 from Canis lupus familiaris (Dog).